The following is a 366-amino-acid chain: ATPase ASNA1 homolog (366 aa).

Lys33–Thr40 serves as a coordination point for ATP. Asp62 is an active-site residue. ATP contacts are provided by Glu234 and Asn261.

Belongs to the arsA ATPase family. As to quaternary structure, homodimer.

Its subcellular location is the cytoplasm. The protein localises to the endoplasmic reticulum. Functionally, ATPase required for the post-translational delivery of tail-anchored (TA) proteins to the endoplasmic reticulum. Recognizes and selectively binds the transmembrane domain of TA proteins in the cytosol. This complex then targets to the endoplasmic reticulum by membrane-bound receptors, where the tail-anchored protein is released for insertion. This process is regulated by ATP binding and hydrolysis. ATP binding drives the homodimer towards the closed dimer state, facilitating recognition of newly synthesized TA membrane proteins. ATP hydrolysis is required for insertion. Subsequently, the homodimer reverts towards the open dimer state, lowering its affinity for the membrane-bound receptor, and returning it to the cytosol to initiate a new round of targeting. The chain is ATPase ASNA1 homolog from Cryptosporidium parvum (strain Iowa II).